The chain runs to 268 residues: Ubiquinone biosynthesis protein COQ4 homolog, mitochondrial (268 aa).

Residues His-171, Asp-172, His-175, and Glu-187 each contribute to the Zn(2+) site.

It belongs to the COQ4 family. In terms of assembly, component of a multi-subunit COQ enzyme complex. Requires Zn(2+) as cofactor.

The protein resides in the mitochondrion inner membrane. It carries out the reaction a 4-hydroxy-3-methoxy-5-(all-trans-polyprenyl)benzoate + H(+) = a 2-methoxy-6-(all-trans-polyprenyl)phenol + CO2. It functions in the pathway cofactor biosynthesis; ubiquinone biosynthesis. Its function is as follows. Lyase that catalyzes the C1-decarboxylation of 4-hydroxy-3-methoxy-5-(all-trans-polyprenyl)benzoic acid into 2-methoxy-6-(all-trans-polyprenyl)phenol during ubiquinone biosynthesis. The protein is Ubiquinone biosynthesis protein COQ4 homolog, mitochondrial of Drosophila erecta (Fruit fly).